The sequence spans 286 residues: ATP synthase gamma chain (286 aa).

Belongs to the ATPase gamma chain family. In terms of assembly, F-type ATPases have 2 components, CF(1) - the catalytic core - and CF(0) - the membrane proton channel. CF(1) has five subunits: alpha(3), beta(3), gamma(1), delta(1), epsilon(1). CF(0) has three main subunits: a, b and c.

It is found in the cell inner membrane. Produces ATP from ADP in the presence of a proton gradient across the membrane. The gamma chain is believed to be important in regulating ATPase activity and the flow of protons through the CF(0) complex. The sequence is that of ATP synthase gamma chain from Leptospira borgpetersenii serovar Hardjo-bovis (strain JB197).